A 207-amino-acid chain; its full sequence is Guanylate kinase (207 aa).

One can recognise a Guanylate kinase-like domain in the interval 5–185; the sequence is GFVLLISGPS…SYEALRAILI (181 aa). Position 12–19 (12–19) interacts with ATP; it reads GPSGAGKS.

Belongs to the guanylate kinase family.

Its subcellular location is the cytoplasm. The catalysed reaction is GMP + ATP = GDP + ADP. Essential for recycling GMP and indirectly, cGMP. The chain is Guanylate kinase (gmk) from Campylobacter jejuni subsp. jejuni serotype O:2 (strain ATCC 700819 / NCTC 11168).